Consider the following 344-residue polypeptide: SUMO-activating enzyme subunit 1 (344 aa).

This sequence belongs to the ubiquitin-activating E1 family. In terms of assembly, heterodimer of sae1 and uba2/sae2. The heterodimer corresponds to the two domains that are encoded on a single polypeptide chain in ubiquitin-activating enzyme E1. Interacts with ube2i.

The protein localises to the nucleus. It participates in protein modification; protein sumoylation. The heterodimer acts as an E1 ligase for sumo1, sumo2, and sumo3. It mediates ATP-dependent activation of sumo proteins followed by formation of a thioester bond between a sumo protein and a conserved active site cysteine residue on uba2/sae2. In Xenopus laevis (African clawed frog), this protein is SUMO-activating enzyme subunit 1 (sae1).